The primary structure comprises 145 residues: Large ribosomal subunit protein uL11 (145 aa).

This sequence belongs to the universal ribosomal protein uL11 family. Part of the ribosomal stalk of the 50S ribosomal subunit. Interacts with L10 and the large rRNA to form the base of the stalk. L10 forms an elongated spine to which L12 dimers bind in a sequential fashion forming a multimeric L10(L12)X complex. Post-translationally, one or more lysine residues are methylated.

Forms part of the ribosomal stalk which helps the ribosome interact with GTP-bound translation factors. This is Large ribosomal subunit protein uL11 from Rubrobacter xylanophilus (strain DSM 9941 / JCM 11954 / NBRC 16129 / PRD-1).